We begin with the raw amino-acid sequence, 378 residues long: O-methyltransferase dpfgI (378 aa).

S-adenosyl-L-methionine is bound by residues 232-233, Asp257, 279-280, and Arg295; these read GG and NF. The Proton acceptor role is filled by His299.

Belongs to the class I-like SAM-binding methyltransferase superfamily. Cation-independent O-methyltransferase family.

Its pathway is secondary metabolite biosynthesis; terpenoid biosynthesis. Functionally, O-methyltransferase; part of the gene cluster that mediates the biosynthesis of diterpenoid pyrones. The first step of the pathway is the synthesis of the alpha-pyrone moiety by the polyketide synthase dpfgA via condensation of one acetyl-CoA starter unit with 3 malonyl-CoA units and 2 methylations. The alpha-pyrone is then combined with geranylgeranyl pyrophosphate (GGPP) formed by the GGPP synthase dpfgD through the action of the prenyltransferase dpfgC to yield a linear alpha-pyrone diterpenoid. Subsequent steps in the diterpenoid pyrone biosynthetic pathway involve the decalin core formation, which is initiated by the epoxidation of the C10-C11 olefin by the FAD-dependent oxidoreductase dpfgE, and is followed by a cyclization cascade catalyzed by the terpene cyclase dpfgB. The short chain dehydrogenase/reductase dpfgG then oxidizes the 8S hydroxy group to a ketone and the short chain dehydrogenase/reductase dpfgH reduces the ketone to the 8R hydroxy group to yield higginsianin B. Higginsianin B is further methylated by the methyltransferase dpfgI to produce the intermediate named FDDP B. The cytochrome P450 monooxygenase dfgpJ then catalyzes a three-step oxidation at C-27 to generate a carboxylic acid as well as C-26 hydroxylation. Finally, methyltransferase dpfgK methylates the carboxylic acid generated by dpfgJ, yielding the final diterpenoid pyrones from the pathway which were named FDDP D and FDDP E. This is O-methyltransferase dpfgI from Gibberella zeae (strain ATCC MYA-4620 / CBS 123657 / FGSC 9075 / NRRL 31084 / PH-1) (Wheat head blight fungus).